The following is a 206-amino-acid chain: Putative 3-methyladenine DNA glycosylase (206 aa).

The protein belongs to the DNA glycosylase MPG family.

The polypeptide is Putative 3-methyladenine DNA glycosylase (Rhodopseudomonas palustris (strain ATCC BAA-98 / CGA009)).